The sequence spans 246 residues: tRNA pseudouridine synthase A (246 aa).

Residue Asp-52 is the Nucleophile of the active site. Position 111 (Tyr-111) interacts with substrate.

Belongs to the tRNA pseudouridine synthase TruA family. In terms of assembly, homodimer.

The enzyme catalyses uridine(38/39/40) in tRNA = pseudouridine(38/39/40) in tRNA. Functionally, formation of pseudouridine at positions 38, 39 and 40 in the anticodon stem and loop of transfer RNAs. The polypeptide is tRNA pseudouridine synthase A (Borreliella burgdorferi (strain ZS7) (Borrelia burgdorferi)).